The sequence spans 350 residues: Induced myeloid leukemia cell differentiation protein Mcl-1 (350 aa).

Residues K5 and K40 each participate in a glycyl lysine isopeptide (Lys-Gly) (interchain with G-Cter in ubiquitin) cross-link. Positions 47–87 are disordered; that stretch reads EIGGGEAGAVIGGSAGASPPSTLTPDSRRVARPPPIGAEVP. Positions 50-61 are enriched in gly residues; sequence GGEAGAVIGGSA. The PEST-like stretch occupies residues 104–175; the sequence is RAAPLEEMEA…PAEEEEDELY (72 aa). The residue at position 121 (S121) is a Phosphoserine. A Glycyl lysine isopeptide (Lys-Gly) (interchain with G-Cter in ubiquitin) cross-link involves residue K136. The segment at 148 to 171 is disordered; it reads GESGNNTSTDGSLPSTPPPAEEEE. The segment covering 150–161 has biased composition (polar residues); it reads SGNNTSTDGSLP. S159 is subject to Phosphoserine; by GSK3-alpha and GSK3-beta. The residue at position 162 (S162) is a Phosphoserine. T163 carries the phosphothreonine; by MAPK modification. Glycyl lysine isopeptide (Lys-Gly) (interchain with G-Cter in ubiquitin) cross-links involve residues K194 and K197. Positions 209–223 match the BH3 motif; that stretch reads ALETLRRVGDGVQRN. Residues 252–272 carry the BH1 motif; the sequence is HVFSDGVTNWGRIVTLISFGA. A BH2 motif is present at residues 304 to 319; it reads DWLVKQRGWDGFVEFF. Residues 328-348 form a helical membrane-spanning segment; that stretch reads IRNVLLAFAGVAGVGAGLAYL.

The protein belongs to the Bcl-2 family. Interacts with HIF3A (via C-terminus domain). Interacts with BAD, BOK, BIK and BMF. Interacts with PMAIP1. Interacts with BBC3. Isoform 1 interacts with BAX, BAK1 and TPT1. Heterodimer of isoform 1 and isoform 2. Homodimers of isoform 1 or isoform 2 are not detected. Isoform 2 does not interact with pro-apoptotic BCL2-related proteins. Interacts with RTL10/BOP. Interacts with BCL2L11; may sequester BCL2L11 to prevent its pro-apoptotic activity. Interacts with GIMAP5 and HSPA8/HSC70; the interaction between HSPA8 and MCL1 is impaired in the absence of GIMAP5. Post-translationally, cleaved by CASP3 during apoptosis. In intact cells cleavage occurs preferentially after Asp-127, yielding a pro-apoptotic 28 kDa C-terminal fragment. Rapidly degraded in the absence of phosphorylation on Thr-163 in the PEST region. In terms of processing, phosphorylated on Ser-159, by GSK3, in response to IL3/interleukin-3 withdrawal. Phosphorylation at Ser-159 induces ubiquitination and proteasomal degradation, abrogating the anti-apoptotic activity. Treatment with taxol or okadaic acid induces phosphorylation on additional sites. Post-translationally, ubiquitinated. Ubiquitination is induced by phosphorylation at Ser-159. Deubiquitinated by USP20; leading to increased stability.

The protein resides in the membrane. Its subcellular location is the cytoplasm. It localises to the mitochondrion. The protein localises to the nucleus. It is found in the nucleoplasm. Involved in the regulation of apoptosis versus cell survival, and in the maintenance of viability but not of proliferation. Mediates its effects by interactions with a number of other regulators of apoptosis. Isoform 1 inhibits apoptosis. Isoform 2 promotes apoptosis. The polypeptide is Induced myeloid leukemia cell differentiation protein Mcl-1 (MCL1) (Homo sapiens (Human)).